The primary structure comprises 347 residues: N-acetyl-gamma-glutamyl-phosphate reductase (347 aa).

Cys-155 is a catalytic residue.

It belongs to the NAGSA dehydrogenase family. Type 1 subfamily.

The protein localises to the cytoplasm. The catalysed reaction is N-acetyl-L-glutamate 5-semialdehyde + phosphate + NADP(+) = N-acetyl-L-glutamyl 5-phosphate + NADPH + H(+). It functions in the pathway amino-acid biosynthesis; L-arginine biosynthesis; N(2)-acetyl-L-ornithine from L-glutamate: step 3/4. Its function is as follows. Catalyzes the NADPH-dependent reduction of N-acetyl-5-glutamyl phosphate to yield N-acetyl-L-glutamate 5-semialdehyde. In Akkermansia muciniphila (strain ATCC BAA-835 / DSM 22959 / JCM 33894 / BCRC 81048 / CCUG 64013 / CIP 107961 / Muc), this protein is N-acetyl-gamma-glutamyl-phosphate reductase.